Reading from the N-terminus, the 423-residue chain is tRNA(Met) cytidine acetate ligase (423 aa).

ATP contacts are provided by residues 7 to 20 (VVEYNPFHNGHLYH), Gly102, Asn165, and Arg190.

This sequence belongs to the TmcAL family.

The protein resides in the cytoplasm. It catalyses the reaction cytidine(34) in elongator tRNA(Met) + acetate + ATP = N(4)-acetylcytidine(34) in elongator tRNA(Met) + AMP + diphosphate. Catalyzes the formation of N(4)-acetylcytidine (ac(4)C) at the wobble position of elongator tRNA(Met), using acetate and ATP as substrates. First activates an acetate ion to form acetyladenylate (Ac-AMP) and then transfers the acetyl group to tRNA to form ac(4)C34. This is tRNA(Met) cytidine acetate ligase from Thermosipho africanus (strain TCF52B).